Here is a 233-residue protein sequence, read N- to C-terminus: Small ribosomal subunit protein uS3 (233 aa).

The KH type-2 domain occupies 39-107 (VRQYLNKELA…PAQINIAEVR (69 aa)).

It belongs to the universal ribosomal protein uS3 family. In terms of assembly, part of the 30S ribosomal subunit. Forms a tight complex with proteins S10 and S14.

Functionally, binds the lower part of the 30S subunit head. Binds mRNA in the 70S ribosome, positioning it for translation. This Cronobacter sakazakii (strain ATCC BAA-894) (Enterobacter sakazakii) protein is Small ribosomal subunit protein uS3.